Consider the following 504-residue polypeptide: Argininosuccinate lyase 2 (504 aa).

This sequence belongs to the lyase 1 family. Argininosuccinate lyase subfamily.

It localises to the cytoplasm. It catalyses the reaction 2-(N(omega)-L-arginino)succinate = fumarate + L-arginine. It functions in the pathway amino-acid biosynthesis; L-arginine biosynthesis; L-arginine from L-ornithine and carbamoyl phosphate: step 3/3. The protein is Argininosuccinate lyase 2 of Agrobacterium fabrum (strain C58 / ATCC 33970) (Agrobacterium tumefaciens (strain C58)).